The primary structure comprises 377 residues: Succinyl-diaminopimelate desuccinylase (377 aa).

Position 66 (His-66) interacts with Zn(2+). Asp-68 is a catalytic residue. Asp-99 is a binding site for Zn(2+). Glu-133 acts as the Proton acceptor in catalysis. Residues Glu-134, Glu-162, and His-348 each contribute to the Zn(2+) site.

This sequence belongs to the peptidase M20A family. DapE subfamily. Homodimer. Zn(2+) is required as a cofactor. The cofactor is Co(2+).

The catalysed reaction is N-succinyl-(2S,6S)-2,6-diaminopimelate + H2O = (2S,6S)-2,6-diaminopimelate + succinate. It participates in amino-acid biosynthesis; L-lysine biosynthesis via DAP pathway; LL-2,6-diaminopimelate from (S)-tetrahydrodipicolinate (succinylase route): step 3/3. In terms of biological role, catalyzes the hydrolysis of N-succinyl-L,L-diaminopimelic acid (SDAP), forming succinate and LL-2,6-diaminopimelate (DAP), an intermediate involved in the bacterial biosynthesis of lysine and meso-diaminopimelic acid, an essential component of bacterial cell walls. The chain is Succinyl-diaminopimelate desuccinylase from Histophilus somni (strain 129Pt) (Haemophilus somnus).